We begin with the raw amino-acid sequence, 1088 residues long: DNA ligase 4 (1088 aa).

2 disordered regions span residues 1–56 (MALS…KFND) and 73–117 (TTTT…TTTT). Low complexity-rich tracts occupy residues 25–53 (DFKNQQQINTSKTTNNNNNINNKNNYNNK) and 73–90 (TTTTTTKNTSTNSNINKT). Residues 95 to 105 (DDIFDDEDEDS) show a composition bias toward acidic residues. Positions 414, 416, 421, 467, 514, 574, 579, 596, and 598 each coordinate ATP. The N6-AMP-lysine intermediate role is filled by Lys416. Residue Glu467 coordinates Mg(2+). Glu574 contributes to the Mg(2+) binding site. BRCT domains are found at residues 827 to 917 (PTQN…PKYM) and 984 to 1088 (CWWS…EILD).

This sequence belongs to the ATP-dependent DNA ligase family. Mg(2+) serves as cofactor.

Its subcellular location is the nucleus. The catalysed reaction is ATP + (deoxyribonucleotide)n-3'-hydroxyl + 5'-phospho-(deoxyribonucleotide)m = (deoxyribonucleotide)n+m + AMP + diphosphate.. Functionally, DNA ligase involved in DNA non-homologous end joining (NHEJ); required for double-strand break (DSB) repair. The protein is DNA ligase 4 (lig4) of Dictyostelium discoideum (Social amoeba).